The primary structure comprises 180 residues: Oligoribonuclease (180 aa).

The Exonuclease domain occupies 7-170; it reads LIWIDLEMTG…DDIRESIAEL (164 aa). Tyr128 is a catalytic residue.

It belongs to the oligoribonuclease family.

The protein localises to the cytoplasm. Its function is as follows. 3'-to-5' exoribonuclease specific for small oligoribonucleotides. The sequence is that of Oligoribonuclease from Pseudomonas fluorescens (strain Pf0-1).